The sequence spans 157 residues: SsrA-binding protein (157 aa).

The tract at residues 132–157 (VHDKRQAQKDKDWAREKDRLFKKAYK) is disordered. Residues 135-157 (KRQAQKDKDWAREKDRLFKKAYK) show a composition bias toward basic and acidic residues.

The protein belongs to the SmpB family.

Its subcellular location is the cytoplasm. Its function is as follows. Required for rescue of stalled ribosomes mediated by trans-translation. Binds to transfer-messenger RNA (tmRNA), required for stable association of tmRNA with ribosomes. tmRNA and SmpB together mimic tRNA shape, replacing the anticodon stem-loop with SmpB. tmRNA is encoded by the ssrA gene; the 2 termini fold to resemble tRNA(Ala) and it encodes a 'tag peptide', a short internal open reading frame. During trans-translation Ala-aminoacylated tmRNA acts like a tRNA, entering the A-site of stalled ribosomes, displacing the stalled mRNA. The ribosome then switches to translate the ORF on the tmRNA; the nascent peptide is terminated with the 'tag peptide' encoded by the tmRNA and targeted for degradation. The ribosome is freed to recommence translation, which seems to be the essential function of trans-translation. This chain is SsrA-binding protein, found in Francisella tularensis subsp. novicida (strain U112).